The following is a 396-amino-acid chain: Activity-regulated cytoskeleton-associated protein (396 aa).

The stretch at 54–78 (SKQVERELKGLHRSVGKLENNLDGY) forms a coiled coil. The segment at 89–100 (KSIKACLCRCQE) is interaction with SH3GL1 or SH3GL3. The segment at 195-214 (QSWVPGEDGQPSPGVDTQIF) is interaction with DNM2. Ser260 carries the post-translational modification Phosphoserine. Residues Lys268 and Lys269 each participate in a glycyl lysine isopeptide (Lys-Gly) (interchain with G-Cter in ubiquitin) cross-link. Thr278 is subject to Phosphothreonine. Residues 358–396 (GLEQAAEPSVTPLPTEDETEALTPALTSESVASDRTQPE) form a disordered region. Positions 382-396 (ALTSESVASDRTQPE) are enriched in polar residues.

This sequence belongs to the ARC/ARG3.1 family. As to quaternary structure, homooligomer; homooligomerizes into virion-like capsids. Interacts with SH3GL1/endophilin-2, SH3GL3/endophilin-3 and DNM2/DYN2. Interacts with CAMK2B (in the kinase inactive state); leading to target ARC to inactive synapses. Interacts with PSEN1. Interacts with GRIN2A and GRIN2B; inhibiting homooligomerization. Post-translationally, palmitoylation anchors the protein into the membrane by allowing direct insertion into the hydrophobic core of the lipid bilayer. Ubiquitinated by UBE3A, leading to its degradation by the proteasome, thereby promoting AMPA receptors (AMPARs) expression at synapses. Ubiquitinated by RNF216 at Lys-268 and Lys-269 limiting ARC protein levels induced by synaptic activity and thus regulating ARC-dependent forms of synaptic plasticity. In terms of processing, phosphorylation at Ser-260 by CaMK2 prevents homooligomerization into virion-like capsids by disrupting an interaction surface essential for high-order oligomerization. Phosphorylation by CaMK2 inhibits synaptic activity. As to expression, expressed exclusively in certain parts of the brain including cortex and molecular layer of the hippocampus. Typically expressed at high level in a minority of neurons. Basal expression higher in cortex than in hippocampus, highest in visual cortex.

It is found in the extracellular vesicle membrane. The protein localises to the postsynaptic cell membrane. Its subcellular location is the synapse. The protein resides in the postsynaptic density. It localises to the early endosome membrane. It is found in the cell projection. The protein localises to the dendrite. Its subcellular location is the cytoplasm. The protein resides in the cytoskeleton. It localises to the cell cortex. It is found in the dendritic spine. The protein localises to the cytoplasmic vesicle. Its subcellular location is the secretory vesicle. The protein resides in the acrosome. It localises to the clathrin-coated vesicle membrane. Functionally, master regulator of synaptic plasticity that self-assembles into virion-like capsids that encapsulate RNAs and mediate intercellular RNA transfer in the nervous system. ARC protein is released from neurons in extracellular vesicles that mediate the transfer of ARC mRNA into new target cells, where ARC mRNA can undergo activity-dependent translation. ARC capsids are endocytosed and are able to transfer ARC mRNA into the cytoplasm of neurons. Acts as a key regulator of synaptic plasticity: required for protein synthesis-dependent forms of long-term potentiation (LTP) and depression (LTD) and for the formation of long-term memory. Regulates synaptic plasticity by promoting endocytosis of AMPA receptors (AMPARs) in response to synaptic activity: this endocytic pathway maintains levels of surface AMPARs in response to chronic changes in neuronal activity through synaptic scaling, thereby contributing to neuronal homeostasis. Acts as a postsynaptic mediator of activity-dependent synapse elimination in the developing cerebellum by mediating elimination of surplus climbing fiber synapses. Accumulates at weaker synapses, probably to prevent their undesired enhancement. This suggests that ARC-containing virion-like capsids may be required to eliminate synaptic material. Required to transduce experience into long-lasting changes in visual cortex plasticity and for long-term memory. Involved in postsynaptic trafficking and processing of amyloid-beta A4 (APP) via interaction with PSEN1. In addition to its role in synapses, also involved in the regulation of the immune system: specifically expressed in skin-migratory dendritic cells and regulates fast dendritic cell migration, thereby regulating T-cell activation. This is Activity-regulated cytoskeleton-associated protein from Rattus norvegicus (Rat).